Reading from the N-terminus, the 396-residue chain is Elongation factor Tu (396 aa).

In terms of domain architecture, tr-type G spans 10–206 (KPHINVGTIG…QMDAYIPEPQ (197 aa)). The segment at 19–26 (GHVDHGKT) is G1. GTP is bound at residue 19-26 (GHVDHGKT). Residue T26 participates in Mg(2+) binding. A G2 region spans residues 60 to 64 (GITIA). Positions 81–84 (DCPG) are G3. GTP is bound by residues 81-85 (DCPGH) and 136-139 (NKAD). The segment at 136-139 (NKAD) is G4. A G5 region spans residues 174-176 (SAL).

It belongs to the TRAFAC class translation factor GTPase superfamily. Classic translation factor GTPase family. EF-Tu/EF-1A subfamily. As to quaternary structure, monomer.

Its subcellular location is the cytoplasm. The catalysed reaction is GTP + H2O = GDP + phosphate + H(+). In terms of biological role, GTP hydrolase that promotes the GTP-dependent binding of aminoacyl-tRNA to the A-site of ribosomes during protein biosynthesis. This chain is Elongation factor Tu, found in Nitrosococcus oceani (strain ATCC 19707 / BCRC 17464 / JCM 30415 / NCIMB 11848 / C-107).